The sequence spans 89 residues: Small ribosomal subunit protein uS15 (89 aa).

Belongs to the universal ribosomal protein uS15 family. Part of the 30S ribosomal subunit. Forms a bridge to the 50S subunit in the 70S ribosome, contacting the 23S rRNA.

Its function is as follows. One of the primary rRNA binding proteins, it binds directly to 16S rRNA where it helps nucleate assembly of the platform of the 30S subunit by binding and bridging several RNA helices of the 16S rRNA. Functionally, forms an intersubunit bridge (bridge B4) with the 23S rRNA of the 50S subunit in the ribosome. The sequence is that of Small ribosomal subunit protein uS15 from Rhizobium johnstonii (strain DSM 114642 / LMG 32736 / 3841) (Rhizobium leguminosarum bv. viciae).